A 226-amino-acid chain; its full sequence is Chalcone--flavanone isomerase (226 aa).

Substrate is bound by residues Thr47, Asn112, and Ser189.

It belongs to the chalcone isomerase family.

The enzyme catalyses a chalcone = a flavanone.. It participates in secondary metabolite biosynthesis; flavonoid biosynthesis. Its function is as follows. Catalyzes the intramolecular cyclization of bicyclic chalcones into tricyclic (S)-flavanones. Responsible for the isomerization of 4,2',4',6'-tetrahydroxychalcone (also termed chalcone) into naringenin. The polypeptide is Chalcone--flavanone isomerase (CHI) (Allium cepa (Onion)).